A 307-amino-acid polypeptide reads, in one-letter code: F-box protein At5g03100 (307 aa).

The region spanning 8–54 (VDFISSLPDEILHHILANTPTKLAIRTSVLSKRWKHVWYETPSISIV) is the F-box domain.

The sequence is that of F-box protein At5g03100 from Arabidopsis thaliana (Mouse-ear cress).